A 372-amino-acid chain; its full sequence is NAD(P)H-quinone oxidoreductase subunit 1 (372 aa).

8 helical membrane passes run 29–49 (WIPF…LVVV), 97–117 (WLFT…YLIV), 130–150 (VGIF…LMAG), 176–196 (LALS…IDIV), 204–224 (ILGW…IAAL), 254–274 (FALF…VFAI), 308–328 (SLGI…AVLM), and 347–367 (FLLP…LAFP).

Belongs to the complex I subunit 1 family. As to quaternary structure, NDH-1 is composed of at least 11 different subunits.

It is found in the cellular thylakoid membrane. It carries out the reaction a plastoquinone + NADH + (n+1) H(+)(in) = a plastoquinol + NAD(+) + n H(+)(out). It catalyses the reaction a plastoquinone + NADPH + (n+1) H(+)(in) = a plastoquinol + NADP(+) + n H(+)(out). In terms of biological role, NDH-1 shuttles electrons from an unknown electron donor, via FMN and iron-sulfur (Fe-S) centers, to quinones in the respiratory and/or the photosynthetic chain. The immediate electron acceptor for the enzyme in this species is believed to be plastoquinone. Couples the redox reaction to proton translocation, and thus conserves the redox energy in a proton gradient. The polypeptide is NAD(P)H-quinone oxidoreductase subunit 1 (Crocosphaera subtropica (strain ATCC 51142 / BH68) (Cyanothece sp. (strain ATCC 51142))).